A 168-amino-acid chain; its full sequence is Ribosome maturation factor RimP (168 aa).

It belongs to the RimP family.

The protein localises to the cytoplasm. Its function is as follows. Required for maturation of 30S ribosomal subunits. In Mycoplasma mobile (strain ATCC 43663 / 163K / NCTC 11711) (Mesomycoplasma mobile), this protein is Ribosome maturation factor RimP.